Reading from the N-terminus, the 441-residue chain is uncharacterized protein (441 aa).

Residues Met1–Gly23 form the signal peptide. Position 24 is an N-acetylcysteine (Cys24). Cys24 carries S-archaeol cysteine lipidation.

Belongs to the bacterial solute-binding protein 1 family.

The protein localises to the cell membrane. Functionally, probably part of a binding-protein-dependent transport system PH1214/15/16. This is an uncharacterized protein from Pyrococcus horikoshii (strain ATCC 700860 / DSM 12428 / JCM 9974 / NBRC 100139 / OT-3).